The chain runs to 280 residues: MASSSFSVTSPAAAASVYAVTQTSSHFPIQNRSRRVSFRLSAKPKLRFLSKPSRSSYPVVKAQSNKVSTGASSNAAKVDGPSSAEGKEKNSLKESSASSPELATEESISEFLTQVTTLVKLVDSRDIVELQLKQLDCELVIRKKEALPQPQAPASYVMMQQPNQPSYAQQMAPPAAPAAAAPAPSTPASLPPPSPPTPAKSSLPTVKSPMAGTFYRSPAPGEPPFIKVGDKVQKGQVLCIVEAMKLMNEIESDHTGTVVDIVAEDGKPVSLDTPLFVVQP.

The transit peptide at 1-82 directs the protein to the chloroplast; the sequence is MASSSFSVTS…SNAAKVDGPS (82 aa). Polar residues predominate over residues 52 to 75; it reads PSRSSYPVVKAQSNKVSTGASSNA. Disordered regions lie at residues 52–106 and 164–215; these read PSRS…ATEE and QPSY…GTFY. Low complexity predominate over residues 177-188; the sequence is PAAAAPAPSTPA. Over residues 189 to 198 the composition is skewed to pro residues; it reads SLPPPSPPTP. Positions 203-279 constitute a Biotinyl-binding domain; that stretch reads LPTVKSPMAG…SLDTPLFVVQ (77 aa). Lys245 is subject to N6-biotinyllysine.

As to quaternary structure, acetyl-CoA carboxylase is a heterohexamer composed of biotin carboxyl carrier protein, biotin carboxylase and 2 subunits each of ACCase subunit alpha and ACCase plastid-coded subunit beta (accD). As to expression, present in developing tissues from roots, leaves, flowers, siliques and seeds (at protein level).

Its subcellular location is the plastid. The protein resides in the chloroplast. Its pathway is lipid metabolism; fatty acid biosynthesis. This protein is a component of the acetyl coenzyme A carboxylase complex; first, biotin carboxylase catalyzes the carboxylation of the carrier protein and then the transcarboxylase transfers the carboxyl group to form malonyl-CoA. This chain is Biotin carboxyl carrier protein of acetyl-CoA carboxylase 1, chloroplastic (BCCP1), found in Arabidopsis thaliana (Mouse-ear cress).